The following is a 358-amino-acid chain: Magnesium-protoporphyrin IX monomethyl ester [oxidative] cyclase 1 (358 aa).

The protein belongs to the AcsF family. Fe cation serves as cofactor.

It carries out the reaction Mg-protoporphyrin IX 13-monomethyl ester + 3 NADPH + 3 O2 + 2 H(+) = 3,8-divinyl protochlorophyllide a + 3 NADP(+) + 5 H2O. Its pathway is porphyrin-containing compound metabolism; chlorophyll biosynthesis (light-independent). Catalyzes the formation of the isocyclic ring in chlorophyll biosynthesis. Mediates the cyclase reaction, which results in the formation of divinylprotochlorophyllide (Pchlide) characteristic of all chlorophylls from magnesium-protoporphyrin IX 13-monomethyl ester (MgPMME). The polypeptide is Magnesium-protoporphyrin IX monomethyl ester [oxidative] cyclase 1 (Synechocystis sp. (strain ATCC 27184 / PCC 6803 / Kazusa)).